Here is a 170-residue protein sequence, read N- to C-terminus: Adenine phosphoribosyltransferase (170 aa).

It belongs to the purine/pyrimidine phosphoribosyltransferase family. In terms of assembly, homodimer.

Its subcellular location is the cytoplasm. The enzyme catalyses AMP + diphosphate = 5-phospho-alpha-D-ribose 1-diphosphate + adenine. It functions in the pathway purine metabolism; AMP biosynthesis via salvage pathway; AMP from adenine: step 1/1. In terms of biological role, catalyzes a salvage reaction resulting in the formation of AMP, that is energically less costly than de novo synthesis. The polypeptide is Adenine phosphoribosyltransferase (Lactococcus lactis subsp. cremoris (strain SK11)).